Reading from the N-terminus, the 169-residue chain is Shikimate kinase (169 aa).

12 to 17 lines the ATP pocket; it reads AVGKTT. Thr16 is a binding site for Mg(2+). Residues Asp34, Arg58, and Gly80 each contribute to the substrate site. Arg119 contributes to the ATP binding site. Arg139 is a binding site for substrate. Position 156 (Arg156) interacts with ATP.

It belongs to the shikimate kinase family. As to quaternary structure, monomer. It depends on Mg(2+) as a cofactor.

It localises to the cytoplasm. It catalyses the reaction shikimate + ATP = 3-phosphoshikimate + ADP + H(+). It functions in the pathway metabolic intermediate biosynthesis; chorismate biosynthesis; chorismate from D-erythrose 4-phosphate and phosphoenolpyruvate: step 5/7. Catalyzes the specific phosphorylation of the 3-hydroxyl group of shikimic acid using ATP as a cosubstrate. The protein is Shikimate kinase of Alkaliphilus oremlandii (strain OhILAs) (Clostridium oremlandii (strain OhILAs)).